Consider the following 593-residue polypeptide: MVEKTSKPSAKTEVAPPVKIIELGAAVSVKELADSLETNPVEVIKALMRKGIMANINQVIDFDIAKGVIEAAGFEAKLKILKKSAAKKASPAKEKLSNFPLRPPVVTIMGHVDHGKTRLLDAIRSTNVMEKEVGGITQHIGAYQVEIKGHKITFLDTPGHEAFTAMRARGAQATDITILVVAADDGVMPQTLEALDHAKAAGVPIILAINKMDKPEANPDRVKQQLAEVGLVVEEWGGDTLAIPTSARENKGINELLEAVLLIAELEDLRADPNQPASGVVIEAEMDKTKGPMATVLVQSGTLKLGDTVVAGNTWGRVKAMFNDVGKRIKKAEPSTPVALLGMESVPQVGDKIIAVATEKQARDMVNENSQSTRKTNAVSLTNVYDQVSQGNIKELNIILKTDVQGSLEPIKDSLEKLSTDKIKININRSGAGNVTESDVMLAMASGGLIIGFSTGIETNAQRLADAEDIDIRHYDIIYKLIEDVDKALQGLLEPTIKEVIDGRAEVRAVFESTKKLSIAGCMVLEGKLVKNSQVRLLRGGEVIVDAPSNSLRRFKEDVKEVVAGYECGVGLKDFNEFQKSDILEFYHKEKSR.

Residues 101–270 form the tr-type G domain; sequence LRPPVVTIMG…LLIAELEDLR (170 aa). A G1 region spans residues 110–117; sequence GHVDHGKT. Position 110 to 117 (110 to 117) interacts with GTP; that stretch reads GHVDHGKT. Positions 135 to 139 are G2; sequence GITQH. Positions 156 to 159 are G3; sequence DTPG. GTP is bound by residues 156–160 and 210–213; these read DTPGH and NKMD. Residues 210 to 213 form a G4 region; sequence NKMD. The tract at residues 246 to 248 is G5; the sequence is SAR.

Belongs to the TRAFAC class translation factor GTPase superfamily. Classic translation factor GTPase family. IF-2 subfamily.

The protein localises to the cytoplasm. One of the essential components for the initiation of protein synthesis. Protects formylmethionyl-tRNA from spontaneous hydrolysis and promotes its binding to the 30S ribosomal subunits. Also involved in the hydrolysis of GTP during the formation of the 70S ribosomal complex. In Dehalococcoides mccartyi (strain CBDB1), this protein is Translation initiation factor IF-2.